Consider the following 727-residue polypeptide: Protein EXECUTER 1, chloroplastic (727 aa).

Disordered stretches follow at residues 1 to 51 (MAAA…SRLF), 65 to 102 (LAGA…AGSG), 340 to 381 (ISSS…LPSD), and 413 to 455 (DEDD…SGDE). A chloroplast-targeting transit peptide spans 1 to 83 (MAAAVSTAPR…PRRRVSSVVR (83 aa)). Low complexity-rich tracts occupy residues 19 to 33 (SSSC…ASMS) and 42 to 51 (PSSGSGSRLF). Residues 413–441 (DEDDENDNPEDEIESSEDIGDGDNVEEAE) show a composition bias toward acidic residues.

Its subcellular location is the plastid. The protein resides in the chloroplast. In terms of biological role, together with EX2, enables higher plants to perceive singlet oxygen as a stress signal in plastid that activates a genetically determined nuclear stress response program which triggers a programmed cell death (PCD). This transfer of singlet oxygen-induced stress-related signals from the plastid to the nucleus that triggers genetically controlled PCD pathway is unique to photosynthetic eukaryotes and operates under mild stress conditions, impeding photosystem II (PSII) without causing photooxidative damage of the plant. This is Protein EXECUTER 1, chloroplastic from Oryza sativa subsp. japonica (Rice).